Consider the following 553-residue polypeptide: MTQAEHRPTNFIRQIIDEDLASGKHSSVATRFPPEPNGYLHIGHAKSICLNFGIARDYQGTCNLRFDDTNPVKEDVEYVESIQRDVQWLGFEWNGAVRYSSDYFDQLHAYAIELINKGLAYVEELTAEQIREYRGTLTQAGKNSPFRDRSVEENLALFEKMKDGGFKEGEACLRAKIDMASSFMVMRDPVIYRIKFAEHHQTGNKWCIYPMYDFTHCISDALEGITHSICTLEFQDNRRLYDWVLDNISIPCHPRQYEFSRLNLEYAIMSKRKLNQLVTEGVVEGWDDPRMPTVSGLRRRGYTPEAVREFCNRIGVTKQDNTVEMSALESCIREDLNERAPRAMAVLDPLRVVLENYPEDLVEELNIPNHPNIPEAGERLVPFSREIYIDRADFREEANKQYKRLVMGKEVRLRHAYIIKAERVEKDAEGNITTLYCSCDRDTLGTNPADGRKVKGVIHWVSAPHALDAEVRLYDRLFSVANPGAAEDFLSTINPQSLRIVPHAKLEPSLRDAKPEFAYQFEREGYFCADSKLSSAEKPVFNLTVALRDTWVG.

Residues 34-44 (PEPNGYLHIGH) carry the 'HIGH' region motif. Residues 35 to 37 (EPN) and 41 to 47 (HIGHAKS) each bind ATP. 2 residues coordinate L-glutamine: aspartate 67 and tyrosine 212. ATP contacts are provided by residues threonine 231, 261–262 (RL), and 269–271 (MSK). Positions 268–272 (IMSKR) match the 'KMSKS' region motif.

This sequence belongs to the class-I aminoacyl-tRNA synthetase family. Monomer.

It localises to the cytoplasm. It catalyses the reaction tRNA(Gln) + L-glutamine + ATP = L-glutaminyl-tRNA(Gln) + AMP + diphosphate. This chain is Glutamine--tRNA ligase, found in Tolumonas auensis (strain DSM 9187 / NBRC 110442 / TA 4).